Here is a 420-residue protein sequence, read N- to C-terminus: 3-isopropylmalate dehydratase large subunit (420 aa).

Residues Cys-301, Cys-361, and Cys-364 each coordinate [4Fe-4S] cluster.

This sequence belongs to the aconitase/IPM isomerase family. LeuC type 2 subfamily. Heterodimer of LeuC and LeuD. Requires [4Fe-4S] cluster as cofactor.

It carries out the reaction (2R,3S)-3-isopropylmalate = (2S)-2-isopropylmalate. The protein operates within amino-acid biosynthesis; L-leucine biosynthesis; L-leucine from 3-methyl-2-oxobutanoate: step 2/4. Functionally, catalyzes the isomerization between 2-isopropylmalate and 3-isopropylmalate, via the formation of 2-isopropylmaleate. This is 3-isopropylmalate dehydratase large subunit from Desulfovibrio desulfuricans (strain ATCC 27774 / DSM 6949 / MB).